Consider the following 202-residue polypeptide: uncharacterized protein (202 aa).

Residues 175 to 195 form a helical membrane-spanning segment; that stretch reads INTGIALFIILTSLLVYFIQF.

The protein resides in the membrane. This is an uncharacterized protein from Dictyostelium discoideum (Social amoeba).